Consider the following 237-residue polypeptide: Mediator of RNA polymerase II transcription subunit 20 (237 aa).

It belongs to the Mediator complex subunit 20 family. As to quaternary structure, component of the Mediator complex.

Its subcellular location is the nucleus. Component of the Mediator complex, a coactivator involved in the regulated transcription of nearly all RNA polymerase II-dependent genes. Mediator functions as a bridge to convey information from gene-specific regulatory proteins to the basal RNA polymerase II transcription machinery. Mediator is recruited to promoters by direct interactions with regulatory proteins and serves as a scaffold for the assembly of a functional preinitiation complex with RNA polymerase II and the general transcription factors. This Scheffersomyces stipitis (strain ATCC 58785 / CBS 6054 / NBRC 10063 / NRRL Y-11545) (Yeast) protein is Mediator of RNA polymerase II transcription subunit 20 (SRB2).